We begin with the raw amino-acid sequence, 101 residues long: Urease subunit beta (101 aa).

It belongs to the urease beta subunit family. Heterotrimer of UreA (gamma), UreB (beta) and UreC (alpha) subunits. Three heterotrimers associate to form the active enzyme.

Its subcellular location is the cytoplasm. The enzyme catalyses urea + 2 H2O + H(+) = hydrogencarbonate + 2 NH4(+). Its pathway is nitrogen metabolism; urea degradation; CO(2) and NH(3) from urea (urease route): step 1/1. The sequence is that of Urease subunit beta from Burkholderia orbicola (strain MC0-3).